Reading from the N-terminus, the 826-residue chain is Beta-galactosidase 7 (826 aa).

An N-terminal signal peptide occupies residues 1–25; it reads MKMKHFTRLLSLFFILITSLSLAKS. Asparagine 154 is a glycosylation site (N-linked (GlcNAc...) asparagine). Glutamate 184 functions as the Proton donor in the catalytic mechanism. Residue glutamate 253 is the Nucleophile of the active site. Asparagine 254, asparagine 351, asparagine 380, asparagine 491, asparagine 665, asparagine 706, asparagine 797, and asparagine 801 each carry an N-linked (GlcNAc...) asparagine glycan. An SUEL-type lectin domain is found at 740 to 826; it reads AHEHNKVELS…PKKLAVELEC (87 aa).

This sequence belongs to the glycosyl hydrolase 35 family. In terms of tissue distribution, expressed in flowers.

The protein resides in the secreted. Its subcellular location is the extracellular space. The protein localises to the apoplast. The enzyme catalyses Hydrolysis of terminal non-reducing beta-D-galactose residues in beta-D-galactosides.. This chain is Beta-galactosidase 7 (BGAL7), found in Arabidopsis thaliana (Mouse-ear cress).